Reading from the N-terminus, the 243-residue chain is UPF0246 protein SEQ_2141 (243 aa).

The protein belongs to the UPF0246 family.

The sequence is that of UPF0246 protein SEQ_2141 from Streptococcus equi subsp. equi (strain 4047).